Reading from the N-terminus, the 131-residue chain is Small ribosomal subunit protein uS8 (131 aa).

Belongs to the universal ribosomal protein uS8 family. As to quaternary structure, part of the 30S ribosomal subunit. Contacts proteins S5 and S12.

One of the primary rRNA binding proteins, it binds directly to 16S rRNA central domain where it helps coordinate assembly of the platform of the 30S subunit. This is Small ribosomal subunit protein uS8 from Cupriavidus necator (strain ATCC 17699 / DSM 428 / KCTC 22496 / NCIMB 10442 / H16 / Stanier 337) (Ralstonia eutropha).